The chain runs to 1063 residues: E3 ubiquitin-protein ligase PDZRN3 (1063 aa).

The RING-type; degenerate zinc finger occupies 18–56 (CALCHKVLEDPLTTPCGHVFCAGCVLPWVVQEGSCPARC). The TRAF-type zinc-finger motif lies at 100 to 158 (EHLERCDFAPARCRHAGCGQLLLRRDVEAHMRDACDARPVGRCQEGCGLPLTHGEQRAG). 2 PDZ domains span residues 249–339 (TLVL…LRRT) and 419–503 (EVGL…IARP). Residue S427 is modified to Phosphoserine. Residues 545 to 602 (QKKHEEDGGTTDTATILSNQHEKDSGVGRTDESTRNDESSEQENNGEDATASANPLAG) form a disordered region. The span at 554-563 (TTDTATILSN) shows a compositional bias: polar residues. Residues 564-582 (QHEKDSGVGRTDESTRNDE) show a composition bias toward basic and acidic residues. The stretch at 680–705 (ESVDKELELLNEELRSIELECLSIVR) forms a coiled coil. Residues 746 to 755 (ELPEKSDKDS) show a composition bias toward basic and acidic residues. Disordered regions lie at residues 746 to 798 (ELPE…IEAY) and 834 to 853 (IKER…PKLG). Residues 756 to 770 (SSAYNTGESCRSTPL) are compositionally biased toward polar residues.

As to quaternary structure, interacts with NLGN1 and EFNB2. Interacts with UBE2D2 and with MUSK via the first PDZ domain. In myotubes, the interaction between PDZRN3 and MUSK is enhanced upon agrin stimulation. Post-translationally, auto-ubiquitinated. Highly expressed in skeletal and cardiac muscle and at lower levels in spinal cord and brain (at protein level). Also expressed in kidney and lung. In muscles, concentrated at the neuromuscular junction (NMJ).

The protein resides in the synapse. It localises to the cytoplasm. The catalysed reaction is S-ubiquitinyl-[E2 ubiquitin-conjugating enzyme]-L-cysteine + [acceptor protein]-L-lysine = [E2 ubiquitin-conjugating enzyme]-L-cysteine + N(6)-ubiquitinyl-[acceptor protein]-L-lysine.. Its pathway is protein modification; protein ubiquitination. Its function is as follows. E3 ubiquitin-protein ligase. Plays an important role in regulating the surface level of MUSK on myotubes. Mediates the ubiquitination of MUSK, promoting its endocytosis and lysosomal degradation. Might contribute to terminal myogenic differentiation. The chain is E3 ubiquitin-protein ligase PDZRN3 (Pdzrn3) from Mus musculus (Mouse).